Reading from the N-terminus, the 633-residue chain is Laccase ARB_05828 (633 aa).

An N-terminal signal peptide occupies residues 1–16 (MKRLGLAALYIGSALA). Positions 22–47 (GPPSRNVPRDDFPMFNPLPSTDLNTR) are excised as a propeptide. N-linked (GlcNAc...) asparagine glycosylation occurs at Asn143. His148, His150, His192, and His194 together coordinate Cu cation. Cys169 and Cys607 form a disulfide bridge. Positions 224–353 (LLMTDHLHSS…GRYWVRTTPA (130 aa)) constitute a Plastocyanin-like domain. Residues Asn286 and Asn456 are each glycosylated (N-linked (GlcNAc...) asparagine). Cu cation contacts are provided by His508, His511, His513, His568, Cys569, His570, and His574.

Belongs to the multicopper oxidase family. In terms of assembly, monomer. It depends on Cu cation as a cofactor.

It is found in the secreted. It catalyses the reaction 4 hydroquinone + O2 = 4 benzosemiquinone + 2 H2O. The protein is Laccase ARB_05828 of Arthroderma benhamiae (strain ATCC MYA-4681 / CBS 112371) (Trichophyton mentagrophytes).